The following is a 188-amino-acid chain: MEITQYQSFHEGSSSRVSMNRNSQVISKIKPKIRIIHIFAPEVIKTDVKNFRSLVQSLTGKPAPGEAKTGKKRAKSRITTPQEPVCDDHQPVNRLSGFTGLLANGGNHQVKEEWGSGDQSTSNTNTYFDLEGLIQDVGEDYFSSFPMRSSSSSQVEGFIFNNNNNNNNNNNNNNNNNTNFDTKAHNSS.

Disordered regions lie at residues 1–20 (MEIT…VSMN), 58–92 (LTGK…HQPV), and 157–188 (GFIF…HNSS). Residues 51 to 60 (FRSLVQSLTG) carry the VQ motif. Over residues 161–179 (NNNNNNNNNNNNNNNNNTN) the composition is skewed to low complexity.

It localises to the nucleus. In terms of biological role, may function as positive regulator of plant growth. The protein is VQ motif-containing protein 18 of Arabidopsis thaliana (Mouse-ear cress).